Consider the following 243-residue polypeptide: 3-deoxy-manno-octulosonate cytidylyltransferase (243 aa).

Belongs to the KdsB family.

It localises to the cytoplasm. The catalysed reaction is 3-deoxy-alpha-D-manno-oct-2-ulosonate + CTP = CMP-3-deoxy-beta-D-manno-octulosonate + diphosphate. Its pathway is nucleotide-sugar biosynthesis; CMP-3-deoxy-D-manno-octulosonate biosynthesis; CMP-3-deoxy-D-manno-octulosonate from 3-deoxy-D-manno-octulosonate and CTP: step 1/1. It participates in bacterial outer membrane biogenesis; lipopolysaccharide biosynthesis. In terms of biological role, activates KDO (a required 8-carbon sugar) for incorporation into bacterial lipopolysaccharide in Gram-negative bacteria. This chain is 3-deoxy-manno-octulosonate cytidylyltransferase, found in Bartonella henselae (strain ATCC 49882 / DSM 28221 / CCUG 30454 / Houston 1) (Rochalimaea henselae).